We begin with the raw amino-acid sequence, 229 residues long: Heptaprenylglyceryl phosphate synthase (229 aa).

Lys-12 contributes to the sn-glycerol 1-phosphate binding site. Mg(2+) contacts are provided by Asp-14 and Ser-40. Residues 159–164, Gly-189, and 209–210 contribute to the sn-glycerol 1-phosphate site; these read YLEYSG and GN.

Belongs to the GGGP/HepGP synthase family. Group I subfamily. In terms of assembly, homodimer. Mg(2+) is required as a cofactor.

The catalysed reaction is sn-glycerol 1-phosphate + all-trans-heptaprenyl diphosphate = 3-heptaprenyl-sn-glycero-1-phosphate + diphosphate. It functions in the pathway membrane lipid metabolism; glycerophospholipid metabolism. Functionally, prenyltransferase that catalyzes in vivo the transfer of the heptaprenyl moiety of heptaprenyl pyrophosphate (HepPP; 35 carbon atoms) to the C3 hydroxyl of sn-glycerol-1-phosphate (G1P), producing heptaprenylglyceryl phosphate (HepGP). This reaction is an ether-bond-formation step in the biosynthesis of archaea-type G1P-based membrane lipids found in Bacillales. The protein is Heptaprenylglyceryl phosphate synthase of Bacillus cereus (strain ATCC 14579 / DSM 31 / CCUG 7414 / JCM 2152 / NBRC 15305 / NCIMB 9373 / NCTC 2599 / NRRL B-3711).